The primary structure comprises 346 residues: Small ribosomal subunit biogenesis GTPase RsgA (346 aa).

Residues Met-1–Lys-26 form a disordered region. A compositionally biased stretch (polar residues) spans Thr-7–Lys-20. Residues Glu-103 to Phe-271 enclose the CP-type G domain. GTP contacts are provided by residues Asn-159–Asp-162 and Gly-213–Ser-221. Zn(2+) is bound by residues Cys-295, Cys-300, His-302, and Cys-308.

Belongs to the TRAFAC class YlqF/YawG GTPase family. RsgA subfamily. As to quaternary structure, monomer. Associates with 30S ribosomal subunit, binds 16S rRNA. Zn(2+) is required as a cofactor.

It is found in the cytoplasm. In terms of biological role, one of several proteins that assist in the late maturation steps of the functional core of the 30S ribosomal subunit. Helps release RbfA from mature subunits. May play a role in the assembly of ribosomal proteins into the subunit. Circularly permuted GTPase that catalyzes slow GTP hydrolysis, GTPase activity is stimulated by the 30S ribosomal subunit. The sequence is that of Small ribosomal subunit biogenesis GTPase RsgA from Haemophilus influenzae (strain 86-028NP).